A 157-amino-acid chain; its full sequence is 2-C-methyl-D-erythritol 2,4-cyclodiphosphate synthase (157 aa).

A divalent metal cation is bound by residues aspartate 8 and histidine 10. 4-CDP-2-C-methyl-D-erythritol 2-phosphate is bound by residues 8-10 and 34-35; these read DVH and HS. Histidine 42 lines the a divalent metal cation pocket. 4-CDP-2-C-methyl-D-erythritol 2-phosphate-binding positions include 56 to 58, 61 to 65, 100 to 106, 132 to 135, phenylalanine 139, and arginine 142; these read DIG, FPDTD, AQAPKMA, and TTTE.

This sequence belongs to the IspF family. Homotrimer. It depends on a divalent metal cation as a cofactor.

It carries out the reaction 4-CDP-2-C-methyl-D-erythritol 2-phosphate = 2-C-methyl-D-erythritol 2,4-cyclic diphosphate + CMP. It participates in isoprenoid biosynthesis; isopentenyl diphosphate biosynthesis via DXP pathway; isopentenyl diphosphate from 1-deoxy-D-xylulose 5-phosphate: step 4/6. Its function is as follows. Involved in the biosynthesis of isopentenyl diphosphate (IPP) and dimethylallyl diphosphate (DMAPP), two major building blocks of isoprenoid compounds. Catalyzes the conversion of 4-diphosphocytidyl-2-C-methyl-D-erythritol 2-phosphate (CDP-ME2P) to 2-C-methyl-D-erythritol 2,4-cyclodiphosphate (ME-CPP) with a corresponding release of cytidine 5-monophosphate (CMP). The chain is 2-C-methyl-D-erythritol 2,4-cyclodiphosphate synthase from Ectopseudomonas mendocina (strain ymp) (Pseudomonas mendocina).